Here is a 914-residue protein sequence, read N- to C-terminus: Linoleate 13S-lipoxygenase 3-1, chloroplastic (914 aa).

A chloroplast-targeting transit peptide spans 1-83 (MALAKEIMGI…PEKAVRFKVR (83 aa)). Residues 96–218 (LKETIVKHLD…DHPGKRIFFS (123 aa)) enclose the PLAT domain. In terms of domain architecture, Lipoxygenase spans 221–914 (PYLPDETPAG…CRGVPNSVSI (694 aa)). Residues H574, H579, H765, N769, and I914 each coordinate Fe cation.

The protein belongs to the lipoxygenase family. Monomer. The cofactor is Fe cation. In terms of tissue distribution, expressed in roots and leaves. Detected in tubers and flower buds.

The protein localises to the plastid. The protein resides in the chloroplast stroma. Its subcellular location is the chloroplast thylakoid. The enzyme catalyses (9Z,12Z)-octadecadienoate + O2 = (13S)-hydroperoxy-(9Z,11E)-octadecadienoate. It catalyses the reaction (9Z,12Z,15Z)-octadecatrienoate + O2 = (13S)-hydroperoxy-(9Z,11E,15Z)-octadecatrienoate. The protein operates within lipid metabolism; oxylipin biosynthesis. Functionally, plant lipoxygenases may be involved in a number of diverse aspects of plant physiology including growth and development, pest resistance, and senescence or responses to wounding. Required for the regulation of wound-induced gene expression, but is not involved in the bulk production of jasmonate upon wounding. Catalyzes the hydroperoxidation of lipids containing a cis,cis-1,4-pentadiene structure. Linolenic acid is the preferred substrate, before linoleic and arachidonic acids. The chain is Linoleate 13S-lipoxygenase 3-1, chloroplastic (LOX3.1) from Solanum tuberosum (Potato).